The sequence spans 56 residues: Large ribosomal subunit protein bL32 (56 aa).

Residues 1-26 (MAVQQNKKSRSKRGMRRSHDALSTAQ) form a disordered region. Basic residues predominate over residues 7–16 (KKSRSKRGMR).

This sequence belongs to the bacterial ribosomal protein bL32 family.

The protein is Large ribosomal subunit protein bL32 of Shewanella amazonensis (strain ATCC BAA-1098 / SB2B).